The primary structure comprises 461 residues: MPVKVTMDKIVALAKNRGFVFPGSEIYGGLANTWDYGPLGVEMKNNIKRIWWKKFIQESPYNVGIDSAILMNREVWVASGHVASFSDPLMDCKECKSRFRADQLIEDYIKEKGLDISIEGWTNEQMMEFIKEHKVPCPKCGAHNFTEIRKFNLMFKTYVGVTEDSKSEVFLRPETAQGIFVNFKNVQRTSRKKIPFGIGQIGKSFRNEITPGNFIFRTREFEQMELEFFCKPGEDMEWFNYWRQFCMDWLVEFGLKRENLRFRDHKKEELSHYSTATTDIEYNFPFGWGELWGIANRTDYDLRQHMEHSGEDMTYTDPVTGEKYIPYCIEPSVGVDRLMLAFLVDAYDEEEVEGETRVVLRLHPAIAPVKVAVFPLSKKLNEAAYKIYLDLKKKFPAEYDESGSIGRRYRRQDEIGTPFCVTYDFDSENDHKVTIRDRDTMEQIRIDIDQVDKYLEEKLKF.

Substrate contacts are provided by R100 and E174. ATP-binding positions include 206-208, 216-221, 290-291, and 334-337; these read RNE, FRTREF, EL, and GVDR. Residue 221-225 coordinates substrate; the sequence is FEQME. 330 to 334 lines the substrate pocket; it reads EPSVG.

Belongs to the class-II aminoacyl-tRNA synthetase family. In terms of assembly, homodimer.

The protein localises to the cytoplasm. It catalyses the reaction tRNA(Gly) + glycine + ATP = glycyl-tRNA(Gly) + AMP + diphosphate. Catalyzes the attachment of glycine to tRNA(Gly). This Caldanaerobacter subterraneus subsp. tengcongensis (strain DSM 15242 / JCM 11007 / NBRC 100824 / MB4) (Thermoanaerobacter tengcongensis) protein is Glycine--tRNA ligase.